The sequence spans 114 residues: Apokedarcidin (114 aa).

2 disulfides stabilise this stretch: C37/C47 and C88/C95.

It belongs to the neocarzinostatin family.

Functionally, binds non-covalently to an enediyne chromophore which is the cytotoxic and mutagenic component of the antibiotic. The chromophore cleaves duplex DNA site-specifically in a single-stranded manner. The apoprotein cleaves proteins selectively, in particular highly basic histones, with H1 proteins being cleaved the more readily. This is Apokedarcidin from Actinomycete sp. (strain L585-6 / ATCC 53650).